The primary structure comprises 942 residues: Protein inturned (942 aa).

A disordered region spans residues 1 to 52; it reads MASVASCDSRPSSDELPGDPSSQEEDEDYDFEDRVSDSGSYSSASSDYDDLE. Residues 22–31 are compositionally biased toward acidic residues; it reads SQEEDEDYDF. Over residues 37–46 the composition is skewed to low complexity; that stretch reads DSGSYSSASS. Positions 185–263 constitute a PDZ domain; the sequence is LVGIIHQTKW…PMQVKLTFEN (79 aa). Phosphoserine is present on residues serine 670 and serine 674. Positions 704–754 are disordered; sequence TRKPSPSCSSGGSDNGCEGGEDDGFSPHTTPDAVRKQRESQGSDGLEESGT.

This sequence belongs to the inturned family. As to quaternary structure, component of the CPLANE (ciliogenesis and planar polarity effectors) complex, composed of INTU, FUZ and WDPCP. Interacts with CPLANE1. Interacts with NPHP4 and DAAM1; INTU is mediating the interaction between NPHP4 and DAAM1.

The protein resides in the cytoplasm. It localises to the cell surface. The protein localises to the cytoskeleton. It is found in the cilium basal body. Its subcellular location is the microtubule organizing center. The protein resides in the centrosome. It localises to the centriole. Plays a key role in ciliogenesis and embryonic development. Regulator of cilia formation by controlling the organization of the apical actin cytoskeleton and the positioning of the basal bodies at the apical cell surface, which in turn is essential for the normal orientation of elongating ciliary microtubules. Plays a key role in definition of cell polarity via its role in ciliogenesis but not via conversion extension. Has an indirect effect on hedgehog signaling. Proposed to function as core component of the CPLANE (ciliogenesis and planar polarity effectors) complex involved in the recruitment of peripheral IFT-A proteins to basal bodies. Required for recruitment of CPLANE2 to the mother centriole. Binds phosphatidylinositol 3-phosphate with highest affinity, followed by phosphatidylinositol 4-phosphate and phosphatidylinositol 5-phosphate. In Homo sapiens (Human), this protein is Protein inturned (INTU).